We begin with the raw amino-acid sequence, 121 residues long: Small ribosomal subunit protein uS13 (121 aa).

Residues 95–121 (LPVRGQNTKNNARTRKGKAVAIAGKKK) form a disordered region. The span at 106–121 (ARTRKGKAVAIAGKKK) shows a compositional bias: basic residues.

The protein belongs to the universal ribosomal protein uS13 family. Part of the 30S ribosomal subunit. Forms a loose heterodimer with protein S19. Forms two bridges to the 50S subunit in the 70S ribosome.

Its function is as follows. Located at the top of the head of the 30S subunit, it contacts several helices of the 16S rRNA. In the 70S ribosome it contacts the 23S rRNA (bridge B1a) and protein L5 of the 50S subunit (bridge B1b), connecting the 2 subunits; these bridges are implicated in subunit movement. Contacts the tRNAs in the A and P-sites. The polypeptide is Small ribosomal subunit protein uS13 (Streptococcus equi subsp. zooepidemicus (strain H70)).